The primary structure comprises 274 residues: 2,3,4,5-tetrahydropyridine-2,6-dicarboxylate N-succinyltransferase (274 aa).

Substrate is bound by residues Arg106 and Asp143.

It belongs to the transferase hexapeptide repeat family. Homotrimer.

The protein resides in the cytoplasm. It carries out the reaction (S)-2,3,4,5-tetrahydrodipicolinate + succinyl-CoA + H2O = (S)-2-succinylamino-6-oxoheptanedioate + CoA. It participates in amino-acid biosynthesis; L-lysine biosynthesis via DAP pathway; LL-2,6-diaminopimelate from (S)-tetrahydrodipicolinate (succinylase route): step 1/3. The sequence is that of 2,3,4,5-tetrahydropyridine-2,6-dicarboxylate N-succinyltransferase from Cupriavidus metallidurans (strain ATCC 43123 / DSM 2839 / NBRC 102507 / CH34) (Ralstonia metallidurans).